Reading from the N-terminus, the 325-residue chain is Beta-ketoacyl-[acyl-carrier-protein] synthase III (325 aa).

Residues C119 and H252 contribute to the active site. Residues 253-257 (QANIR) are ACP-binding. Residue N282 is part of the active site.

The protein belongs to the thiolase-like superfamily. FabH family. Homodimer.

The protein localises to the cytoplasm. It carries out the reaction malonyl-[ACP] + acetyl-CoA + H(+) = 3-oxobutanoyl-[ACP] + CO2 + CoA. The protein operates within lipid metabolism; fatty acid biosynthesis. Catalyzes the condensation reaction of fatty acid synthesis by the addition to an acyl acceptor of two carbons from malonyl-ACP. Catalyzes the first condensation reaction which initiates fatty acid synthesis and may therefore play a role in governing the total rate of fatty acid production. Possesses both acetoacetyl-ACP synthase and acetyl transacylase activities. Its substrate specificity determines the biosynthesis of branched-chain and/or straight-chain of fatty acids. This chain is Beta-ketoacyl-[acyl-carrier-protein] synthase III, found in Variovorax paradoxus (strain S110).